Here is a 334-residue protein sequence, read N- to C-terminus: Ornithine carbamoyltransferase, catabolic (334 aa).

Carbamoyl phosphate contacts are provided by residues 57–60, glutamine 84, arginine 108, and 135–138; these read STRT and HPTQ. L-ornithine contacts are provided by residues asparagine 168, aspartate 232, and 236–237; that span reads SM. Residues 274 to 275 and arginine 321 contribute to the carbamoyl phosphate site; that span reads CL.

This sequence belongs to the aspartate/ornithine carbamoyltransferase superfamily. OTCase family.

It is found in the cytoplasm. It catalyses the reaction carbamoyl phosphate + L-ornithine = L-citrulline + phosphate + H(+). It participates in amino-acid degradation; L-arginine degradation via ADI pathway; carbamoyl phosphate from L-arginine: step 2/2. Reversibly catalyzes the transfer of the carbamoyl group from carbamoyl phosphate (CP) to the N(epsilon) atom of ornithine (ORN) to produce L-citrulline. The sequence is that of Ornithine carbamoyltransferase, catabolic (arcB) from Haemophilus influenzae (strain ATCC 51907 / DSM 11121 / KW20 / Rd).